The sequence spans 236 residues: ATP synthase subunit a, chloroplastic (236 aa).

A run of 5 helical transmembrane segments spans residues 25-45 (MHGQ…AFAV), 87-107 (FIGT…LIPW), 123-143 (DINT…YAGL), 180-202 (LFGN…PLVI), and 210-230 (GLFT…AYIG).

This sequence belongs to the ATPase A chain family. As to quaternary structure, F-type ATPases have 2 components, CF(1) - the catalytic core - and CF(0) - the membrane proton channel. CF(1) has five subunits: alpha(3), beta(3), gamma(1), delta(1), epsilon(1). CF(0) has four main subunits: a, b, b' and c.

It is found in the plastid. The protein resides in the chloroplast thylakoid membrane. Its function is as follows. Key component of the proton channel; it plays a direct role in the translocation of protons across the membrane. The protein is ATP synthase subunit a, chloroplastic of Ostreococcus tauri.